The sequence spans 309 residues: 4-hydroxy-3-methylbut-2-enyl diphosphate reductase (309 aa).

Residue C12 participates in [4Fe-4S] cluster binding. 2 residues coordinate (2E)-4-hydroxy-3-methylbut-2-enyl diphosphate: H41 and H74. Residues H41 and H74 each coordinate dimethylallyl diphosphate. Residues H41 and H74 each coordinate isopentenyl diphosphate. C96 is a binding site for [4Fe-4S] cluster. H124 contributes to the (2E)-4-hydroxy-3-methylbut-2-enyl diphosphate binding site. H124 serves as a coordination point for dimethylallyl diphosphate. H124 contacts isopentenyl diphosphate. E126 serves as the catalytic Proton donor. (2E)-4-hydroxy-3-methylbut-2-enyl diphosphate is bound at residue T167. Residue C197 coordinates [4Fe-4S] cluster. Positions 225, 226, 227, and 269 each coordinate (2E)-4-hydroxy-3-methylbut-2-enyl diphosphate. S225, S226, N227, and S269 together coordinate dimethylallyl diphosphate. S225, S226, N227, and S269 together coordinate isopentenyl diphosphate.

This sequence belongs to the IspH family. Requires [4Fe-4S] cluster as cofactor.

The enzyme catalyses isopentenyl diphosphate + 2 oxidized [2Fe-2S]-[ferredoxin] + H2O = (2E)-4-hydroxy-3-methylbut-2-enyl diphosphate + 2 reduced [2Fe-2S]-[ferredoxin] + 2 H(+). It carries out the reaction dimethylallyl diphosphate + 2 oxidized [2Fe-2S]-[ferredoxin] + H2O = (2E)-4-hydroxy-3-methylbut-2-enyl diphosphate + 2 reduced [2Fe-2S]-[ferredoxin] + 2 H(+). It functions in the pathway isoprenoid biosynthesis; dimethylallyl diphosphate biosynthesis; dimethylallyl diphosphate from (2E)-4-hydroxy-3-methylbutenyl diphosphate: step 1/1. The protein operates within isoprenoid biosynthesis; isopentenyl diphosphate biosynthesis via DXP pathway; isopentenyl diphosphate from 1-deoxy-D-xylulose 5-phosphate: step 6/6. In terms of biological role, catalyzes the conversion of 1-hydroxy-2-methyl-2-(E)-butenyl 4-diphosphate (HMBPP) into a mixture of isopentenyl diphosphate (IPP) and dimethylallyl diphosphate (DMAPP). Acts in the terminal step of the DOXP/MEP pathway for isoprenoid precursor biosynthesis. This Pseudoalteromonas translucida (strain TAC 125) protein is 4-hydroxy-3-methylbut-2-enyl diphosphate reductase.